Reading from the N-terminus, the 314-residue chain is Trihelix transcription factor ASR3 (314 aa).

The segment at 1 to 34 is disordered; sequence MALEQLGLGVSAVDGGENSSAPSNDGGDDGVKTA. In terms of domain architecture, Myb-like spans 38-104; the sequence is RWTRQEILVL…QCRKRWSNLA (67 aa). A Nuclear localization signal motif is present at residues 84-91; it reads CKRHGVNR. The short motif at 161 to 165 is the EAR 1 element; sequence LSLGL. Thr-189 carries the post-translational modification Phosphothreonine; by MAPK4. The disordered stretch occupies residues 207-255; the sequence is CVADQGRVKEKQPEAANVEGGSTSQEERKRKRTSFGEKEEEEEEGETKK. An EAR 2 motif is present at residues 280–284; the sequence is LNLKL.

In terms of assembly, homodimer. Interacts directly with MPK4. Post-translationally, phosphorylated on Thr-189 by MPK4 in response to microbe-associated molecular patterns (MAMPs, e.g. flg22, elf18, chitin, and LPS). This phosphorylation enhances DNA-binding and thus negatively regulates immune gene expression.

It localises to the nucleus. In terms of biological role, transcriptional repressor that binds DNA and plays a negative role in regulating microbe-associated molecular patterns-(MAMPs, e.g. flg22, elf18, chitin, and LPS) triggered immunity (PTI) by negatively regulating immune gene expression. This chain is Trihelix transcription factor ASR3, found in Arabidopsis thaliana (Mouse-ear cress).